The chain runs to 69 residues: DNA gyrase inhibitor YacG (69 aa).

Zn(2+)-binding residues include cysteine 14, cysteine 17, cysteine 33, and cysteine 37. The disordered stretch occupies residues 46–69; sequence ADEEKSIPGAPDMSDSDGWSEDQY. Positions 59-69 are enriched in acidic residues; it reads SDSDGWSEDQY.

Belongs to the DNA gyrase inhibitor YacG family. In terms of assembly, interacts with GyrB. Zn(2+) is required as a cofactor.

Functionally, inhibits all the catalytic activities of DNA gyrase by preventing its interaction with DNA. Acts by binding directly to the C-terminal domain of GyrB, which probably disrupts DNA binding by the gyrase. The polypeptide is DNA gyrase inhibitor YacG (Aliivibrio fischeri (strain ATCC 700601 / ES114) (Vibrio fischeri)).